A 302-amino-acid polypeptide reads, in one-letter code: Large ribosomal subunit protein bL28m (302 aa).

The protein belongs to the bacterial ribosomal protein bL28 family. In terms of assembly, component of the mitochondrial ribosome large subunit (39S) which comprises a 16S rRNA and about 50 distinct proteins.

It localises to the mitochondrion. The sequence is that of Large ribosomal subunit protein bL28m (mRpL28) from Drosophila melanogaster (Fruit fly).